A 381-amino-acid polypeptide reads, in one-letter code: Heme A synthase (381 aa).

A run of 5 helical transmembrane segments spans residues 25-45 (GAVR…VAVG), 112-132 (LLGR…WWRG), 138-158 (LLLG…IGWI), 176-196 (LALH…LAAG), and 212-232 (VAGL…LVAG). Position 277 (His-277) interacts with heme. 3 helical membrane passes run 279 to 299 (LFAY…VRMA), 307 to 327 (AMGV…TLLL), and 329 to 349 (VPLW…IMAT). His-337 lines the heme pocket.

Belongs to the COX15/CtaA family. Type 2 subfamily. Interacts with CtaB. It depends on heme b as a cofactor.

It is found in the cell membrane. It carries out the reaction Fe(II)-heme o + 2 A + H2O = Fe(II)-heme a + 2 AH2. Its pathway is porphyrin-containing compound metabolism; heme A biosynthesis; heme A from heme O: step 1/1. Functionally, catalyzes the conversion of heme O to heme A by two successive hydroxylations of the methyl group at C8. The first hydroxylation forms heme I, the second hydroxylation results in an unstable dihydroxymethyl group, which spontaneously dehydrates, resulting in the formyl group of heme A. In Methylorubrum populi (strain ATCC BAA-705 / NCIMB 13946 / BJ001) (Methylobacterium populi), this protein is Heme A synthase.